The following is a 567-amino-acid chain: Glucose-6-phosphate isomerase, cytosolic (567 aa).

The active-site Proton donor is the Glu-360. Active-site residues include His-391 and Lys-516.

Belongs to the GPI family. In terms of assembly, homodimer.

It is found in the cytoplasm. The catalysed reaction is alpha-D-glucose 6-phosphate = beta-D-fructose 6-phosphate. It functions in the pathway carbohydrate degradation; glycolysis; D-glyceraldehyde 3-phosphate and glycerone phosphate from D-glucose: step 2/4. This Zea mays (Maize) protein is Glucose-6-phosphate isomerase, cytosolic (PHI1).